The primary structure comprises 753 residues: Polyadenylate-binding protein, cytoplasmic and nuclear (753 aa).

The segment covering 1–43 (MSAEASTTPAAETPVNGTPETSTTPAAPAAEATAAETAAPSTS) has biased composition (low complexity). The tract at residues 1–49 (MSAEASTTPAAETPVNGTPETSTTPAAPAAEATAAETAAPSTSQPHSAS) is disordered. 4 RRM domains span residues 48-126 (ASLY…WSQR), 136-213 (GNVF…HHIS), 229-306 (TNVY…RAQK), and 332-460 (VNLY…LAQR). 3 disordered regions span residues 363-417 (VMRD…SDKK), 607-649 (RGPG…PAAG), and 727-753 (GTEG…ENKS). Over residues 376-417 (DSDKEKKEESKEEKPEAAEKTEEAAKESGDDQDKENKKSDKK) the composition is skewed to basic and acidic residues. A compositionally biased stretch (gly residues) spans 607 to 619 (RGPGYGQGRGGVP). Residues 633–649 (QNAQPAAGRGEEAPAAG) show a composition bias toward low complexity. In terms of domain architecture, PABC spans 647-724 (AAGLTAQSLA…ALSVYDEYMK (78 aa)). Basic and acidic residues predominate over residues 737–753 (PKPKEAATEESTEENKS).

This sequence belongs to the polyadenylate-binding protein type-1 family.

The protein localises to the cytoplasm. The protein resides in the nucleus. Binds the poly(A) tail of mRNA. Appears to be an important mediator of the multiple roles of the poly(A) tail in mRNA biogenesis, stability and translation. In the nucleus, involved in both mRNA cleavage and polyadenylation. Is also required for efficient mRNA export to the cytoplasm. Acts in concert with a poly(A)-specific nuclease (PAN) to affect poly(A) tail shortening, which may occur concomitantly with either nucleocytoplasmic mRNA transport or translational initiation. In the cytoplasm, stimulates translation initiation and regulates mRNA decay through translation termination-coupled poly(A) shortening, probably mediated by PAN. In Aspergillus terreus (strain NIH 2624 / FGSC A1156), this protein is Polyadenylate-binding protein, cytoplasmic and nuclear (pab1).